Consider the following 362-residue polypeptide: Holliday junction branch migration complex subunit RuvB (362 aa).

Residues 1–20 (MKRTIMTNTDTFEQPNTGAN) form a disordered region. The segment at 15–203 (PNTGANEESL…FGFTAHLDFY (189 aa)) is large ATPase domain (RuvB-L). ATP-binding positions include leucine 42, arginine 43, glycine 84, lysine 87, threonine 88, threonine 89, 150–152 (EDF), arginine 193, tyrosine 203, and arginine 240. Residue threonine 88 participates in Mg(2+) binding. The small ATPAse domain (RuvB-S) stretch occupies residues 204–274 (PHEELEKLIE…DVKEALALYQ (71 aa)). Positions 277-362 (TEGLDRLDIA…ESAYDVNEMS (86 aa)) are head domain (RuvB-H). Arginine 332 and arginine 337 together coordinate DNA.

It belongs to the RuvB family. As to quaternary structure, homohexamer. Forms an RuvA(8)-RuvB(12)-Holliday junction (HJ) complex. HJ DNA is sandwiched between 2 RuvA tetramers; dsDNA enters through RuvA and exits via RuvB. An RuvB hexamer assembles on each DNA strand where it exits the tetramer. Each RuvB hexamer is contacted by two RuvA subunits (via domain III) on 2 adjacent RuvB subunits; this complex drives branch migration. In the full resolvosome a probable DNA-RuvA(4)-RuvB(12)-RuvC(2) complex forms which resolves the HJ.

The protein localises to the cytoplasm. The catalysed reaction is ATP + H2O = ADP + phosphate + H(+). In terms of biological role, the RuvA-RuvB-RuvC complex processes Holliday junction (HJ) DNA during genetic recombination and DNA repair, while the RuvA-RuvB complex plays an important role in the rescue of blocked DNA replication forks via replication fork reversal (RFR). RuvA specifically binds to HJ cruciform DNA, conferring on it an open structure. The RuvB hexamer acts as an ATP-dependent pump, pulling dsDNA into and through the RuvAB complex. RuvB forms 2 homohexamers on either side of HJ DNA bound by 1 or 2 RuvA tetramers; 4 subunits per hexamer contact DNA at a time. Coordinated motions by a converter formed by DNA-disengaged RuvB subunits stimulates ATP hydrolysis and nucleotide exchange. Immobilization of the converter enables RuvB to convert the ATP-contained energy into a lever motion, pulling 2 nucleotides of DNA out of the RuvA tetramer per ATP hydrolyzed, thus driving DNA branch migration. The RuvB motors rotate together with the DNA substrate, which together with the progressing nucleotide cycle form the mechanistic basis for DNA recombination by continuous HJ branch migration. Branch migration allows RuvC to scan DNA until it finds its consensus sequence, where it cleaves and resolves cruciform DNA. The protein is Holliday junction branch migration complex subunit RuvB of Bifidobacterium adolescentis (strain ATCC 15703 / DSM 20083 / NCTC 11814 / E194a).